A 203-amino-acid chain; its full sequence is Ribosome maturation factor RimP (203 aa).

Residues 183-203 (FDDIETEGSAEGTTGSEEENK) are disordered.

This sequence belongs to the RimP family.

It localises to the cytoplasm. Functionally, required for maturation of 30S ribosomal subunits. This Ruegeria sp. (strain TM1040) (Silicibacter sp.) protein is Ribosome maturation factor RimP.